A 510-amino-acid polypeptide reads, in one-letter code: NAD(P)H-quinone oxidoreductase subunit 2 B, chloroplastic (510 aa).

13 helical membrane-spanning segments follow: residues 24–44, 57–77, 99–119, 124–144, 150–170, 183–203, 227–247, 295–315, 323–343, 347–367, 395–415, 418–438, and 484–504; these read LLLF…GLIL, IPWL…ALLF, IFQF…VEYI, MAIT…MFLC, ITIF…SGYT, YLLM…WLYG, PGIS…LSPA, WHLL…LIAI, MLAY…IVGD, GYAS…GTFA, ALSS…AGFF, LHLF…IGLL, and MIVC…IIAI.

The protein belongs to the complex I subunit 2 family. In terms of assembly, NDH is composed of at least 16 different subunits, 5 of which are encoded in the nucleus.

It is found in the plastid. The protein localises to the chloroplast thylakoid membrane. The catalysed reaction is a plastoquinone + NADH + (n+1) H(+)(in) = a plastoquinol + NAD(+) + n H(+)(out). It catalyses the reaction a plastoquinone + NADPH + (n+1) H(+)(in) = a plastoquinol + NADP(+) + n H(+)(out). NDH shuttles electrons from NAD(P)H:plastoquinone, via FMN and iron-sulfur (Fe-S) centers, to quinones in the photosynthetic chain and possibly in a chloroplast respiratory chain. The immediate electron acceptor for the enzyme in this species is believed to be plastoquinone. Couples the redox reaction to proton translocation, and thus conserves the redox energy in a proton gradient. This chain is NAD(P)H-quinone oxidoreductase subunit 2 B, chloroplastic, found in Chloranthus spicatus (Chulantree).